A 55-amino-acid chain; its full sequence is ATP synthase F(0) complex subunit 8 (55 aa).

A helical transmembrane segment spans residues 4–24 (LNPAPWFAILVFSWLVFLTVI). Residues 34 to 55 (TNEPTSQSTEKAKPEPWNWPWH) form a disordered region.

This sequence belongs to the ATPase protein 8 family. In terms of assembly, component of the ATP synthase complex composed at least of ATP5F1A/subunit alpha, ATP5F1B/subunit beta, ATP5MC1/subunit c (homooctomer), MT-ATP6/subunit a, MT-ATP8/subunit 8, ATP5ME/subunit e, ATP5MF/subunit f, ATP5MG/subunit g, ATP5MK/subunit k, ATP5MJ/subunit j, ATP5F1C/subunit gamma, ATP5F1D/subunit delta, ATP5F1E/subunit epsilon, ATP5PF/subunit F6, ATP5PB/subunit b, ATP5PD/subunit d, ATP5PO/subunit OSCP. ATP synthase complex consists of a soluble F(1) head domain (subunits alpha(3) and beta(3)) - the catalytic core - and a membrane F(0) domain - the membrane proton channel (subunits c, a, 8, e, f, g, k and j). These two domains are linked by a central stalk (subunits gamma, delta, and epsilon) rotating inside the F1 region and a stationary peripheral stalk (subunits F6, b, d, and OSCP).

It localises to the mitochondrion membrane. Its function is as follows. Subunit 8, of the mitochondrial membrane ATP synthase complex (F(1)F(0) ATP synthase or Complex V) that produces ATP from ADP in the presence of a proton gradient across the membrane which is generated by electron transport complexes of the respiratory chain. ATP synthase complex consist of a soluble F(1) head domain - the catalytic core - and a membrane F(1) domain - the membrane proton channel. These two domains are linked by a central stalk rotating inside the F(1) region and a stationary peripheral stalk. During catalysis, ATP synthesis in the catalytic domain of F(1) is coupled via a rotary mechanism of the central stalk subunits to proton translocation. In vivo, can only synthesize ATP although its ATP hydrolase activity can be activated artificially in vitro. Part of the complex F(0) domain. This chain is ATP synthase F(0) complex subunit 8, found in Oncorhynchus mykiss (Rainbow trout).